A 285-amino-acid chain; its full sequence is Ubiquinone biosynthesis protein COQ4, mitochondrial (285 aa).

A mitochondrion-targeting transit peptide spans 1–11 (MPPAVRQGMRT). Positions 166, 167, 170, and 182 each coordinate Zn(2+).

This sequence belongs to the COQ4 family. In terms of assembly, component of a multi-subunit COQ enzyme complex, composed of at least COQ3, COQ4, COQ5, COQ6, COQ7 and COQ9. It depends on Zn(2+) as a cofactor.

The protein resides in the mitochondrion inner membrane. It catalyses the reaction a 4-hydroxy-3-methoxy-5-(all-trans-polyprenyl)benzoate + H(+) = a 2-methoxy-6-(all-trans-polyprenyl)phenol + CO2. The protein operates within cofactor biosynthesis; ubiquinone biosynthesis. Its function is as follows. Lyase that catalyzes the C1-decarboxylation of 4-hydroxy-3-methoxy-5-(all-trans-polyprenyl)benzoic acid into 2-methoxy-6-(all-trans-polyprenyl)phenol during ubiquinone biosynthesis. This Paracoccidioides lutzii (strain ATCC MYA-826 / Pb01) (Paracoccidioides brasiliensis) protein is Ubiquinone biosynthesis protein COQ4, mitochondrial.